We begin with the raw amino-acid sequence, 57 residues long: Phospholipase A2 superbin b (57 aa).

Residues Y28, G30, and G32 each contribute to the Ca(2+) site. Residues C29 and C45 are joined by a disulfide bond. H48 is a catalytic residue. Position 49 (D49) interacts with Ca(2+).

Requires Ca(2+) as cofactor. As to expression, expressed by the venom gland.

The protein resides in the secreted. It carries out the reaction a 1,2-diacyl-sn-glycero-3-phosphocholine + H2O = a 1-acyl-sn-glycero-3-phosphocholine + a fatty acid + H(+). Snake venom phospholipase A2 (PLA2) that inhibits collagen-induced platelet aggregation. In terms of inhibition of platelet aggregation, superbin b is more potent as superbin c, and d. PLA2 catalyzes the calcium-dependent hydrolysis of the 2-acyl groups in 3-sn-phosphoglycerides. This chain is Phospholipase A2 superbin b, found in Austrelaps superbus (Lowland copperhead snake).